Reading from the N-terminus, the 289-residue chain is MAVVERDSDYYDSSYLADYYESLWTDHAALEDIAVYWAFFKERVLLSQSRVDSKFFLLDVGTGTGRVLHSLIDKAVNDADMSLDAMQFVGMDKSPFMLEQAQRAKQLPQEVRASWFVGTATALEDIASLADPHGKANLLIFAFSGINHLHQPGEIDQFFLSARRVLLPGGLALVSVCAPLLDIEGGDSVPNPYGQVKEVKSKRLEGILYREWETGQKIEGHLFTNSLKTDVVQVSQDGSERVIERNIHNIPLTLLTRDGLRRSAAAAKLEIIEERCIRDEVIFALRAVG.

The protein belongs to the methyltransferase superfamily.

The enzyme catalyses (1S,4S)-4-[(4-hydroxyphenyl)methyl]-2,5-diazaspiro[bicyclo[3.2.1]octane-6,1'-cyclohexan]-4'-one + S-adenosyl-L-methionine = (1S,4S)-4-[(4-hydroxyphenyl)methyl]-2-methyl-2,5-diazaspiro[bicyclo[3.2.1]octane-6,1'-cyclohexan]-4'-one + S-adenosyl-L-homocysteine + H(+). It catalyses the reaction (1S,4S)-4-[(4-methoxyphenyl)methyl]-2,5-diazaspiro[bicyclo[3.2.1]octane-6,1'-cyclohexan]-4'-one + S-adenosyl-L-methionine = (1S,4S)-4-[(4-methoxyphenyl)methyl]-2-methyl-2,5-diazaspiro[bicyclo[3.2.1]octane-6,1'-cyclohexan]-4'-one + S-adenosyl-L-homocysteine + H(+). The protein operates within secondary metabolite biosynthesis. Functionally, N-methyltransferase; part of the gene cluster that mediates the biosynthesis of the alkaloid (-)-FR901483, a potent immunosuppressant that shows efficacy in animal models and a probable inhibitor of purine nucleotide biosynthesis by targeting phosphoribosylpyrophosphate amidotransferase (PPAT). Within the pathway, FrzE methylates the amine at position C10'. The biosynthesis of (-)-FR901483 starts with the condensation of two L-tyrosines to yield (S,S)-dityrosyl-piperazine. This process occurs in 3 steps with the non-canonical nonribosomal peptide synthetase FrzA catalyzing the reduction of L-tyrosine into L-tyrosinal, the spontaneous condensation of 2 L-tyrosinal units, and the subsequent reduction by the NmrA-like family domain-containing oxidoreductase FrzB. The cytochrome P450 monooxygenase FrzC then performs coupling between N10 and C1' to morph the piperazine into a 1,4-diazabicyclo[3.2.1]octane spiro-fused to a 2,5-cyclohexadienone. The dienone portion is further reduced to cyclohexanone by the flavin-dependent reductase FrzD. The methyltranserases (MTs) FrzE and FrzF are then involved in the methylation at the C10' amine and the C4 phenolic oxygen, respectively. The order of the two MTs appear to be interchangeable. Cleavage of the C9-N10' bond by the dioxygenase FrzG then leads to formation of a conjugated iminium. In addition to the oxidation of C9, an additional dehydrogenation between C7 and C8 can occur to give a likely shunt product. The next biosynthetic step is the intramolecular aldol condensation catalyzed by the newly identified aldolase FrzH to yield an aza-tricyclic product with the formation of a C9-C3' bond. The short-chain dehydrogenase/reductase FrzI then produces dephospho-(-)-FR901483 that is phosphorylated at C4'-OH into (-)-FR901483 by the phosphotransferase FrzJ. The polypeptide is N-methyltransferase FrzE (Cladobotryum sp).